A 2290-amino-acid chain; its full sequence is MKGHQFKSWIFELREIVREIKNSHYFLDSWTQFDSVGSFIHIFFHQERFRKLLDPRIFSILLLRNSQGSTSNRYFTIKGVVLFVVAALLYRINNRNMVESKNLYLKGLLPIPMNSIGPRNDTSEESFGSSNINRLIVSLLYLTKGKKISESCFRDPKESTWVLPITKKCIMPESNWSSRWWRNWIGKKRDFCCKISNETVAGIDISFKEKDIKYLEFLFVYYMDDPIRKGHDWELFDRLSPSKRRNIINLNSGQLFEILVKDWICYLMFAFREKIPIEVEGFFKQQGAGSTIQSNDIEHVSHLFSRNKWAISLQNCAQFHMWQFHQDLFVSWGKNPHESDFLRKISRENWIWLDNVWLVNKDRFFSKVRNVSSNIQYDSTRSSFVQVTDSSQLNGSSDQFIDPFDSISNEDSEYHYHTLINQREIQQLKERSILWDPSFIQTEGREIESDRFSKYLSGYSSMPRLFTEREKRMNNHLLSEESEEFLGNPTRAIRSFFSDRWSELHLGSNPTERSTRDQKLLKKEQDVSFVPSRRSENKEIVNIFKIITYLQNTVSIHPISSDLGCDMVPKDELDMDSSNKISFLNKNPFFDLFHLFHERKRGGYTLRHDFESEERFQEMADLFTLSITEPDLVYHKGFAFSIDSYGLDQRQFLKEVFNSRDESKKKSLLVLPPIFYEENESFYRRIRKNWVRISCGNYLEDPKRVVFASNNIMEAVNQYRLIRNLIQIQFQYSPYGYIRNVLNRFFLMKIPDRNFEYGIQRDLIGNDTLNHRTIMKDTINQHLSNLKKSQKKWFDPLIFLSRTERSINRDPNAYRYKWSNGSKNFQEHLEHFVSERKSRFQVVFDRLCINQYSIDWSEVIDKKDLSKSLRFFLSKLLRFFLSKLLLFLSKLLLFLSNSLPFFFVSFENIPIHRSEIHIYELKGPNDQLCNQLLESIGLQIVHLKKLKPFLLDDHNTSQKSKFLINGGTISPFLFNKIPKWMIDSFHTRKNRRKSFDNTDSYFSIVSHDQDNWLNPVKPFQRSLLISSFSKANRLRFLNNPHHFCFYCNKRFPFYVEKARLNNSDFTYGQFLTILFIHNKIFSACGGKKKHAFLERDTISPSSIESQVSNIFISNDFPQSGDERYNLYKSFHFPIRSDPLVRRAIYSIADISGTPLIKGQRVNFERTYCQTLSDMNLSDSEEKSLHQYLNFNSNMGLIHTPCSEKYLQRKKRSLCLKKCVDKGQMDRTFQRDSAFSTLSKLNLFQTYMPWFFTWTGYKYLNLIFLDTFSDLLRILSSSQKFVSIFHDIMHGLDISWRILQKKLCLPQRNLISEISSKSLHNLILSEEMIHRNNESSLISTHLRSPNVREVLYSILFLLLVAGYIVRTHLLFVSRAYSELQTEFEKIKSLMIPSYMIELRKLLDRYPTSELNSFWLKNLFLVALEQLGDCLEEIRGSGGNMLWGGDPAYGVKSIRSKKKDLKINFIDIISIIPNPINRITFSRNTRHLSHTSKEIYSLIRKRKNVSGDWIDDKIESWVANSDSIDDKEREFLVQFSTLRAEKRIDQILLSLTHSDHLSKNDSGYQMIEQPGTIYLRYLVDIHKKYLMNYEFNTSCLAERRIFLAHYQTITYSQTSCGANSFHFPSHGKPFSLRLALSPSRSILVIGSIGTGRSYLVKYLATNSYVPFITVFLNKFLDNKPKGFFIDDIDIDDSDDIDASNDIDRELDTELELLTMMNALTMDMMSEIDLFYITLQFELAKAMSPCIIWIPNIHDLDVNESNYLALGLLVNSLSRDCERCSTRNILVIASTHIPQKVDPALIAPNKLNTCIKIRRLLIPQQRKHFFTLSYTRGFHLEKKMFHTNGFESITMGSSARDLVALTNEALSISITQKKSIIDTNTIRSALHRQTWDLRSQVRSVQDHGILFYQIGRAVAQNVLISNCPIDPISIYMKKKSCNEGDSYLYKWYFELGTSMKKFTILLYLLSCSAGSVAQDLWSLPGPDEKNRITSYGFIENDSDLVHGLLEVQGALVGSSRTEKDCSQFDNDRVTLLFRSEPRDPLYMMQDGSCSIVDQRFLYEKYESEFEEGEGEGVLDPQQIEEDLFNHIVWAPRIWRPRGFLFDCIERPNELGFPYLAGSFRGKRIIYDEKYELQENDSEFLQSGTMQYQRRDRSSKEQGFFRISQFIWDPADPLFFLFKDQPFVSVFSHREFFADEEMSKGLLTSQTDPPTSIYKRWFIKNTQEKHFELLIQRQRWLRTNSSLSNGFFRSNTRSESYQYLSNLFLSNGTLLDRMTKTLLKKRWLFPDEMKIGFM.

An ATP-binding site is contributed by 1644-1651 (GSIGTGRS).

This sequence belongs to the Ycf2 family.

It localises to the plastid. The protein localises to the chloroplast stroma. Functionally, probable ATPase of unknown function. Its presence in a non-photosynthetic plant (Epifagus virginiana) and experiments in tobacco indicate that it has an essential function which is probably not related to photosynthesis. The polypeptide is Protein Ycf2 (Barbarea verna (Land cress)).